The primary structure comprises 326 residues: Transcription initiation factor IIB (326 aa).

The segment at 26-57 (DVEVCPECGSPRLIRDYRRGEFICQDCGLVIE) adopts a TFIIB-type zinc-finger fold. Residues Cys-30, Cys-33, Cys-49, and Cys-52 each contribute to the Zn(2+) site. 2 consecutive repeat copies span residues 143-226 (SELD…TREL) and 237-318 (DYIP…ELAE).

The protein belongs to the TFIIB family.

Functionally, stabilizes TBP binding to an archaeal box-A promoter. Also responsible for recruiting RNA polymerase II to the pre-initiation complex (DNA-TBP-TFIIB). The sequence is that of Transcription initiation factor IIB from Archaeoglobus fulgidus (strain ATCC 49558 / DSM 4304 / JCM 9628 / NBRC 100126 / VC-16).